The primary structure comprises 295 residues: Protoheme IX farnesyltransferase 2 (295 aa).

Helical transmembrane passes span 9–29 (ITKPGIIFGNVLSVAGGFFLA), 36–56 (FALFLAVVIGTSLVVASGCVF), 83–103 (LTLALVYATLLGVAGFSLLYV), 108–128 (LSAFCALIGFIVYVGFYSLWL), 135–155 (GTLVGSLSGAMPPVIGYCAVS), 163–183 (VTLLVMFSLWQMPHSFAIAIF), 209–229 (IVLYVLAFVLATLMLTLGGYA), 230–250 (GLGYLAVAAAMGLYWLYMAWG), and 264–284 (VFGFSILTVTALSVMMGVDSQ).

Belongs to the UbiA prenyltransferase family. Protoheme IX farnesyltransferase subfamily.

The protein localises to the cell inner membrane. The catalysed reaction is heme b + (2E,6E)-farnesyl diphosphate + H2O = Fe(II)-heme o + diphosphate. Its pathway is porphyrin-containing compound metabolism; heme O biosynthesis; heme O from protoheme: step 1/1. Functionally, converts heme B (protoheme IX) to heme O by substitution of the vinyl group on carbon 2 of heme B porphyrin ring with a hydroxyethyl farnesyl side group. In Pseudomonas putida (strain W619), this protein is Protoheme IX farnesyltransferase 2.